The sequence spans 426 residues: Glutamate-1-semialdehyde 2,1-aminomutase (426 aa).

Position 265 is an N6-(pyridoxal phosphate)lysine (Lys265).

Belongs to the class-III pyridoxal-phosphate-dependent aminotransferase family. HemL subfamily. As to quaternary structure, homodimer. Requires pyridoxal 5'-phosphate as cofactor.

It localises to the cytoplasm. The enzyme catalyses (S)-4-amino-5-oxopentanoate = 5-aminolevulinate. The protein operates within porphyrin-containing compound metabolism; protoporphyrin-IX biosynthesis; 5-aminolevulinate from L-glutamyl-tRNA(Glu): step 2/2. The chain is Glutamate-1-semialdehyde 2,1-aminomutase from Neisseria gonorrhoeae (strain NCCP11945).